A 255-amino-acid chain; its full sequence is Type III pantothenate kinase (255 aa).

6 to 13 (DVGNTNTV) is an ATP binding site. Residues Y100 and 107–110 (GADR) contribute to the substrate site. The active-site Proton acceptor is D109. D129 is a K(+) binding site. Residue T132 participates in ATP binding. T184 is a binding site for substrate.

This sequence belongs to the type III pantothenate kinase family. Homodimer. It depends on NH4(+) as a cofactor. K(+) serves as cofactor.

It is found in the cytoplasm. It carries out the reaction (R)-pantothenate + ATP = (R)-4'-phosphopantothenate + ADP + H(+). Its pathway is cofactor biosynthesis; coenzyme A biosynthesis; CoA from (R)-pantothenate: step 1/5. In terms of biological role, catalyzes the phosphorylation of pantothenate (Pan), the first step in CoA biosynthesis. This Acetivibrio thermocellus (strain ATCC 27405 / DSM 1237 / JCM 9322 / NBRC 103400 / NCIMB 10682 / NRRL B-4536 / VPI 7372) (Clostridium thermocellum) protein is Type III pantothenate kinase.